The chain runs to 318 residues: NADH-ubiquinone oxidoreductase chain 1 (318 aa).

8 consecutive transmembrane segments (helical) span residues 2 to 22, 70 to 90, 100 to 120, 147 to 167, 172 to 192, 222 to 242, 253 to 273, and 294 to 314; these read FMIN…FLTL, MFIL…IPLP, LGVL…LWSG, AIIL…TLII, MWLI…TLAE, LFFM…AILF, ELYT…FLWI, and LPLT…TSGI.

This sequence belongs to the complex I subunit 1 family. Core subunit of respiratory chain NADH dehydrogenase (Complex I) which is composed of 45 different subunits.

It is found in the mitochondrion inner membrane. It catalyses the reaction a ubiquinone + NADH + 5 H(+)(in) = a ubiquinol + NAD(+) + 4 H(+)(out). Functionally, core subunit of the mitochondrial membrane respiratory chain NADH dehydrogenase (Complex I) which catalyzes electron transfer from NADH through the respiratory chain, using ubiquinone as an electron acceptor. Essential for the catalytic activity and assembly of complex I. This is NADH-ubiquinone oxidoreductase chain 1 (MT-ND1) from Bos indicus (Zebu).